The sequence spans 281 residues: MATNFLAHEKIWFDKFKYDDAERRFYEQMNGPVAGASRQENGASVILRDIARARENIQKSLAGSSGPGASSGTSGDHGELVVRIASLEVENQSLRGVVQELQQAISKLEARLNVLEKSSPGHRATAPQTQHVSPMRQVEPPAKKPATPAEDDEDDDIDLFGSDNEEEDKEAAQLREERLRQYAEKKAKKPALVAKSSILLDVKPWDDETDMAQLEACVRSIQLDGLVWGASKLVPVGYGIRKLQIQCVVEDDKVGTDLLEEEITKFEEHVQSVDIAAFNKI.

N-acetylalanine is present on A2. K17 is modified (N6-acetyllysine). S37, E40, S44, and S60 each carry phosphoserine. T73 is modified (phosphothreonine). The tract at residues L80–L115 is leucine-zipper. Residues S86, N91, L94, and S106 each carry the phosphoserine modification. K107 carries the post-translational modification N6-acetyllysine. K117 is subject to N6-acetyllysine; alternate. The residue at position 117 (K117) is an N6-succinyllysine; alternate. The segment at S118–A172 is disordered. S119 is modified (phosphoserine). The residue at position 129 (T129) is a Phosphothreonine. At S133 the chain carries Phosphoserine. A Phosphothreonine modification is found at T147. A compositionally biased stretch (acidic residues) spans A149–K169. Phosphoserine; by CK2 is present on S162. The interval Q173–I281 is catalytic (GEF).

The protein belongs to the EF-1-beta/EF-1-delta family. EF-1 is composed of 4 subunits: alpha, beta, delta isoform 1, and gamma. Isoform 2 interacts with HSF1 and NFE2L2. Isoform 2 is specifically expressed in brain, cerebellum and testis.

It localises to the nucleus. EF-1-beta and EF-1-delta stimulate the exchange of GDP bound to EF-1-alpha to GTP, regenerating EF-1-alpha for another round of transfer of aminoacyl-tRNAs to the ribosome. Its function is as follows. Regulates induction of heat-shock-responsive genes through association with heat shock transcription factors and direct DNA-binding at heat shock promoter elements (HSE). The sequence is that of Elongation factor 1-delta (EEF1D) from Homo sapiens (Human).